A 327-amino-acid polypeptide reads, in one-letter code: Annexin A8 (327 aa).

Annexin repeat units lie at residues 21 to 92 (FNPD…ALMY), 93 to 164 (PPYR…CLLQ), 177 to 249 (GLAL…TVVK), and 253 to 324 (NVHS…NLVG). Positions 266, 268, 270, and 310 each coordinate Ca(2+).

Belongs to the annexin family.

This protein is an anticoagulant protein that acts as an indirect inhibitor of the thromboplastin-specific complex, which is involved in the blood coagulation cascade. The sequence is that of Annexin A8 (Anxa8) from Rattus norvegicus (Rat).